A 148-amino-acid chain; its full sequence is tRNA-specific adenosine deaminase (148 aa).

Residues 1–116 (MEQALKQARL…SNLRYFNSSA (116 aa)) enclose the CMP/dCMP-type deaminase domain. A Zn(2+)-binding site is contributed by His48. The active-site Proton donor is the Glu50. Zn(2+)-binding residues include Cys78 and Cys81.

Belongs to the cytidine and deoxycytidylate deaminase family. In terms of assembly, homodimer. Zn(2+) is required as a cofactor.

The enzyme catalyses adenosine(34) in tRNA + H2O + H(+) = inosine(34) in tRNA + NH4(+). Functionally, catalyzes the deamination of adenosine to inosine at the wobble position 34 of tRNA(Arg2). The sequence is that of tRNA-specific adenosine deaminase from Rickettsia typhi (strain ATCC VR-144 / Wilmington).